The primary structure comprises 572 residues: Proline--tRNA ligase (572 aa).

It belongs to the class-II aminoacyl-tRNA synthetase family. ProS type 1 subfamily. Homodimer.

Its subcellular location is the cytoplasm. The enzyme catalyses tRNA(Pro) + L-proline + ATP = L-prolyl-tRNA(Pro) + AMP + diphosphate. Catalyzes the attachment of proline to tRNA(Pro) in a two-step reaction: proline is first activated by ATP to form Pro-AMP and then transferred to the acceptor end of tRNA(Pro). As ProRS can inadvertently accommodate and process non-cognate amino acids such as alanine and cysteine, to avoid such errors it has two additional distinct editing activities against alanine. One activity is designated as 'pretransfer' editing and involves the tRNA(Pro)-independent hydrolysis of activated Ala-AMP. The other activity is designated 'posttransfer' editing and involves deacylation of mischarged Ala-tRNA(Pro). The misacylated Cys-tRNA(Pro) is not edited by ProRS. The chain is Proline--tRNA ligase from Yersinia enterocolitica serotype O:8 / biotype 1B (strain NCTC 13174 / 8081).